The sequence spans 440 residues: Phenylacetate-coenzyme A ligase (440 aa).

The protein belongs to the phenylacetyl-CoA ligase family. In terms of assembly, monomer.

It carries out the reaction 2-phenylacetate + ATP + CoA = phenylacetyl-CoA + AMP + diphosphate. The protein operates within aromatic compound metabolism; phenylacetate degradation. Inhibition of activity is observed in the presence of a 1 mM of the divalent cations zinc, copper, and nickel. Its function is as follows. Catalyzes the activation of phenylacetic acid (PA) to phenylacetyl-CoA (PA-CoA). Involved in the phenylalanine metabolism. The polypeptide is Phenylacetate-coenzyme A ligase (paaK) (Aromatoleum evansii (Azoarcus evansii)).